Here is a 116-residue protein sequence, read N- to C-terminus: Putative UPF0320 protein YJR162C (116 aa).

Belongs to the UPF0320 family.

The protein is Putative UPF0320 protein YJR162C of Saccharomyces cerevisiae (strain ATCC 204508 / S288c) (Baker's yeast).